The chain runs to 139 residues: Histone H2B (139 aa).

Positions 1 to 10 (MAPKVAEKKP) are enriched in basic and acidic residues. A disordered region spans residues 1 to 47 (MAPKVAEKKPSLAGKAPAGKAPAEKKEAGKKTTTATGEKKKRTKARK). Lys8 and Lys9 each carry N6-acetyllysine; alternate. Residues Lys8 and Lys9 each participate in a glycyl lysine isopeptide (Lys-Gly) (interchain with G-Cter in SUMO); alternate cross-link. An N6-acetyllysine modification is found at Lys15. An N6-acetyllysine; alternate modification is found at Lys25. Lys25 is covalently cross-linked (Glycyl lysine isopeptide (Lys-Gly) (interchain with G-Cter in SUMO); alternate). Residue Lys26 forms a Glycyl lysine isopeptide (Lys-Gly) (interchain with G-Cter in SUMO) linkage. Residue Lys133 forms a Glycyl lysine isopeptide (Lys-Gly) (interchain with G-Cter in ubiquitin) linkage.

The protein belongs to the histone H2B family. In terms of assembly, the nucleosome is a histone octamer containing two molecules each of H2A, H2B, H3 and H4 assembled in one H3-H4 heterotetramer and two H2A-H2B heterodimers. The octamer wraps approximately 147 bp of DNA. Post-translationally, monoubiquitinated by the UBC2-BRE1 complex to form H2BK123ub1. H2BK123ub1 gives a specific tag for epigenetic transcriptional activation and is also prerequisite for H3K4me and H3K79me formation. H2BK123ub1 also modulates the formation of double-strand breaks during meiosis and is a prerequisite for DNA-damage checkpoint activation. Acetylated by GCN5 to form H2BK11ac and H2BK16ac. H2BK16ac can also be formed by ESA1. Acetylation of N-terminal lysines and particularly formation of H2BK11acK16ac has a positive effect on transcription. In terms of processing, sumoylation to form H2BK6su or H2BK7su, and probably also H2BK16su or H2BK17su, occurs preferentially near the telomeres and represses gene transcription.

It is found in the nucleus. The protein localises to the chromosome. Its function is as follows. Core component of nucleosome. Nucleosomes wrap and compact DNA into chromatin, limiting DNA accessibility to the cellular machineries which require DNA as a template. Histones thereby play a central role in transcription regulation, DNA repair, DNA replication and chromosomal stability. DNA accessibility is regulated via a complex set of post-translational modifications of histones, also called histone code, and nucleosome remodeling. The protein is Histone H2B (HTB1) of Yarrowia lipolytica (strain CLIB 122 / E 150) (Yeast).